The chain runs to 258 residues: Development-specific 25 kDa protein (258 aa).

An NAD(+)-binding site is contributed by 10-34 (VYVGGFSGFGYQVCQMMMKKPMKHL). Ser-138 serves as a coordination point for substrate. Tyr-151 (proton acceptor) is an active-site residue.

It belongs to the short-chain dehydrogenases/reductases (SDR) family.

The protein is Development-specific 25 kDa protein of Sarcophaga peregrina (Flesh fly).